Consider the following 179-residue polypeptide: Orotate phosphoribosyltransferase (179 aa).

5-phospho-alpha-D-ribose 1-diphosphate contacts are provided by residues Arg-94, Lys-95, Lys-98, His-100, and 120–128; that span reads EDTSTTGNS. Positions 124 and 152 each coordinate orotate.

It belongs to the purine/pyrimidine phosphoribosyltransferase family. PyrE subfamily. Homodimer. Requires Mg(2+) as cofactor.

The enzyme catalyses orotidine 5'-phosphate + diphosphate = orotate + 5-phospho-alpha-D-ribose 1-diphosphate. The protein operates within pyrimidine metabolism; UMP biosynthesis via de novo pathway; UMP from orotate: step 1/2. Catalyzes the transfer of a ribosyl phosphate group from 5-phosphoribose 1-diphosphate to orotate, leading to the formation of orotidine monophosphate (OMP). The protein is Orotate phosphoribosyltransferase of Mycobacterium bovis (strain ATCC BAA-935 / AF2122/97).